The sequence spans 96 residues: Copper-sensing transcriptional repressor RicR (96 aa).

The residue at position 2 (T2) is an N-acetylthreonine. Positions 38, 63, and 67 each coordinate Cu cation.

The protein belongs to the CsoR family.

It is found in the cytoplasm. Functionally, under low copper conditions, represses the expression of lpqS, Rv2963, mymT, socA, socB, mmcO and its own expression. In the presence of copper, RicR dissociates from DNA, leading to the expression of the target genes. Members of the RicR regulon are important for copper resistance during infections and full virulence in a mouse model of infection. The polypeptide is Copper-sensing transcriptional repressor RicR (Mycobacterium tuberculosis (strain ATCC 25618 / H37Rv)).